Reading from the N-terminus, the 174-residue chain is MKLHDLKPAPGAHRERKRIGRGIGSGKGKTGGKGMMGQKARSGPKPSPSFEGGQMRITRKMPKLRGFKNRWRVEYQVINIGQLNDVPDGTELTIEEMVAQGWIHPAKPVKILGDGELERKLTIHAHKFSASARARIEAAGGAAIETPWVVERRSRSRGPNPPRHSRKAETPQKA.

Disordered stretches follow at residues 1–57 (MKLH…QMRI) and 147–174 (PWVVERRSRSRGPNPPRHSRKAETPQKA). The span at 21 to 35 (RGIGSGKGKTGGKGM) shows a compositional bias: gly residues.

Belongs to the universal ribosomal protein uL15 family. Part of the 50S ribosomal subunit.

Functionally, binds to the 23S rRNA. This Roseiflexus sp. (strain RS-1) protein is Large ribosomal subunit protein uL15.